The following is a 116-amino-acid chain: Large ribosomal subunit protein uL18 (116 aa).

This sequence belongs to the universal ribosomal protein uL18 family. In terms of assembly, part of the 50S ribosomal subunit; part of the 5S rRNA/L5/L18/L25 subcomplex. Contacts the 5S and 23S rRNAs.

Functionally, this is one of the proteins that bind and probably mediate the attachment of the 5S RNA into the large ribosomal subunit, where it forms part of the central protuberance. The polypeptide is Large ribosomal subunit protein uL18 (Pseudomonas fluorescens (strain SBW25)).